We begin with the raw amino-acid sequence, 597 residues long: Elongation factor 4 (597 aa).

A tr-type G domain is found at 2–184 (KNIRNFSIIA…TVVQKIPAPK (183 aa)). GTP is bound by residues 14 to 19 (DHGKST) and 131 to 134 (NKID).

It belongs to the TRAFAC class translation factor GTPase superfamily. Classic translation factor GTPase family. LepA subfamily.

It is found in the cell inner membrane. It carries out the reaction GTP + H2O = GDP + phosphate + H(+). Its function is as follows. Required for accurate and efficient protein synthesis under certain stress conditions. May act as a fidelity factor of the translation reaction, by catalyzing a one-codon backward translocation of tRNAs on improperly translocated ribosomes. Back-translocation proceeds from a post-translocation (POST) complex to a pre-translocation (PRE) complex, thus giving elongation factor G a second chance to translocate the tRNAs correctly. Binds to ribosomes in a GTP-dependent manner. This chain is Elongation factor 4, found in Laribacter hongkongensis (strain HLHK9).